A 501-amino-acid polypeptide reads, in one-letter code: Endoglucanase 1 (501 aa).

A signal peptide spans 1-29 (MALYLSSSRLITFLSFILLLSNGFSSSSS). Catalysis depends on Asp-96, which acts as the Nucleophile. Active-site residues include His-422, Asp-473, and Glu-482.

This sequence belongs to the glycosyl hydrolase 9 (cellulase E) family.

The protein resides in the secreted. It catalyses the reaction Endohydrolysis of (1-&gt;4)-beta-D-glucosidic linkages in cellulose, lichenin and cereal beta-D-glucans.. This Arabidopsis thaliana (Mouse-ear cress) protein is Endoglucanase 1 (CEL2).